Reading from the N-terminus, the 184-residue chain is MKNITDPFPCLGYWPSAGSFGFNTDILATNPINLSIVIGVLIFFGKGVLSDLLDNRKQRILRTIRNSEELREGAIEQLEKAQARLKKVETEADRFRVNGYSEIEREKLNLINSIYTTLEQLENYKNETIHFEQQRAINQVRQRVLQQALQGALGTLNSCLNNELHFRTIAANIGMFGAMKEKNN.

Residues 27-49 traverse the membrane as a helical segment; sequence LATNPINLSIVIGVLIFFGKGVL.

The protein belongs to the ATPase B chain family. As to quaternary structure, F-type ATPases have 2 components, F(1) - the catalytic core - and F(0) - the membrane proton channel. F(1) has five subunits: alpha(3), beta(3), gamma(1), delta(1), epsilon(1). F(0) has four main subunits: a(1), b(1), b'(1) and c(10-14). The alpha and beta chains form an alternating ring which encloses part of the gamma chain. F(1) is attached to F(0) by a central stalk formed by the gamma and epsilon chains, while a peripheral stalk is formed by the delta, b and b' chains.

It localises to the plastid. The protein localises to the chloroplast thylakoid membrane. F(1)F(0) ATP synthase produces ATP from ADP in the presence of a proton or sodium gradient. F-type ATPases consist of two structural domains, F(1) containing the extramembraneous catalytic core and F(0) containing the membrane proton channel, linked together by a central stalk and a peripheral stalk. During catalysis, ATP synthesis in the catalytic domain of F(1) is coupled via a rotary mechanism of the central stalk subunits to proton translocation. Its function is as follows. Component of the F(0) channel, it forms part of the peripheral stalk, linking F(1) to F(0). The protein is ATP synthase subunit b, chloroplastic of Lotus japonicus (Lotus corniculatus var. japonicus).